Here is a 121-residue protein sequence, read N- to C-terminus: Mitochondrial intermembrane space cysteine motif-containing protein MIX14 (121 aa).

CHCH domains follow at residues 14–56 (VANC…VPSV) and 60–105 (MSEC…VKNK). 4 short sequence motifs (cx9C motif) span residues 17 to 27 (CPQEFLQYHKC), 38 to 48 (CKDGRMILSTC), 63 to 73 (CSEPMKKYDQC), and 87 to 97 (CLGFLQDLRKC). 4 disulfide bridges follow: Cys17–Cys48, Cys27–Cys38, Cys63–Cys97, and Cys73–Cys87.

Its subcellular location is the mitochondrion intermembrane space. The protein is Mitochondrial intermembrane space cysteine motif-containing protein MIX14 (MIX14) of Saccharomyces cerevisiae (strain ATCC 204508 / S288c) (Baker's yeast).